Consider the following 155-residue polypeptide: Cathelicidin-1 (155 aa).

Positions 1 to 29 (METPRASLSLGRWSLWLLLLGLALPSASA) are cleaved as a signal peptide. Position 30 is a pyrrolidone carboxylic acid (glutamine 30). Positions 30–143 (QALSYREAVL…KQPWAPPQAA (114 aa)) are excised as a propeptide. Disulfide bonds link cysteine 85–cysteine 96, cysteine 107–cysteine 124, and cysteine 146–cysteine 154.

This sequence belongs to the cathelicidin family. As to expression, large granules of neutrophils.

Its subcellular location is the secreted. Potent microbicidal activity; active against S.aureus and E.coli. This is Cathelicidin-1 (CATHL1) from Bos taurus (Bovine).